The following is a 1436-amino-acid chain: Non-structural polyprotein 1AB (1436 aa).

Residues 104-142 are a coiled coil; that stretch reads KLIHKANALQERLRLSQEEKATLALDVQFLQHENVRLKE. The next 5 helical transmembrane spans lie at 156–176, 239–259, 286–306, 313–333, and 344–364; these read WIIM…YAHS, VFYY…LAIG, VLPT…TLMV, LLAI…LCFM, and GLIA…LTGT. Catalysis depends on charge relay system; for serine protease activity residues His461, Asp489, and Ser551. Residues 587–620 are a coiled coil; the sequence is VKAPSQVELLKEEIERLKAQLNSATENATTVVTQ. Tyr693 carries the post-translational modification O-(5'-phospho-RNA)-tyrosine. 2 disordered regions span residues 756–828 and 913–934; these read AKPI…YSQT and SKNK…EDQG. The region spanning 1181–1307 is the RdRp catalytic domain; that stretch reads KHFIEFDWTR…TTPSVPDDYE (127 aa).

This sequence belongs to the astroviridae polyprotein 1AB family. In terms of assembly, monomer. In terms of processing, cleaved by the viral and host proteases. The protease is probably autocatalytically cleaved.

It is found in the host membrane. It carries out the reaction RNA(n) + a ribonucleoside 5'-triphosphate = RNA(n+1) + diphosphate. Functionally, responsible for the cleavage of the polyprotein into functional products. Its function is as follows. Protein covalently attached to the 5' extremity of the genomic and subgenomic RNAs. It may serve as a primer for the replicase. The chain is Non-structural polyprotein 1AB (ORF1) from Homo sapiens (Human).